The sequence spans 849 residues: MAP7 domain-containing protein 1 (849 aa).

Disordered regions lie at residues 1 to 151 and 186 to 210; these read MESG…REER and EQRL…EKNK. Over residues 24 to 41 the composition is skewed to pro residues; the sequence is EPRPSPEGDPSPPPPPTP. Thr49 and Thr53 each carry phosphothreonine. 2 positions are modified to phosphoserine: Ser72 and Ser95. A Phosphothreonine modification is found at Thr99. Ser115 and Ser118 each carry phosphoserine. At Thr120 the chain carries Phosphothreonine. Residues Ser125 and Ser127 each carry the phosphoserine modification. Over residues 132 to 151 the composition is skewed to basic and acidic residues; the sequence is QDVKKAGERHKLAKERREER. The stretch at 167–223 forms a coiled coil; that stretch reads EKAKALREKQLQERRRRLEEQRLKAEQRRAALEERQRQKLEKNKERYEAAIQRSVKK. Phosphoserine occurs at positions 256, 275, 315, 368, and 401. Residues 318–815 form a disordered region; the sequence is TLPRNGRDQG…GFPAKGTAGD (498 aa). Over residues 407–437 the composition is skewed to basic and acidic residues; that stretch reads RRLEATPVQKKEKKDKERENEKEKSALARER. 4 positions are modified to phosphoserine: Ser444, Ser448, Ser454, and Ser460. Residues 457–474 show a composition bias toward polar residues; sequence AELSTKSKARPTSPSTTW. Residue Lys462 forms a Glycyl lysine isopeptide (Lys-Gly) (interchain with G-Cter in SUMO2) linkage. Phosphoserine is present on residues Ser479 and Ser496. Positions 479 to 497 are enriched in pro residues; the sequence is SPCPSPGPGHTLPPKPPSP. Residues 523 to 539 are compositionally biased toward basic and acidic residues; sequence PEDKNHSKSRTAEEKEP. Residues 542 to 556 are compositionally biased toward pro residues; that stretch reads PASPAPSPVPSPTPA. Phosphoserine is present on residues Ser544, Ser548, and Ser552. A Phosphothreonine modification is found at Thr554. The segment covering 568–582 has biased composition (low complexity); that stretch reads PPDTAVPAVPTVPTF. Positions 602 to 724 form a coiled coil; the sequence is TTDREEATRL…QERRKRLEEI (123 aa). Residues 603–743 show a composition bias toward basic and acidic residues; the sequence is TDREEATRLL…AETKKQDGKE (141 aa).

This sequence belongs to the MAP7 family.

Its subcellular location is the cytoplasm. It is found in the cytoskeleton. The protein localises to the spindle. It localises to the microtubule organizing center. The protein resides in the centrosome. Its subcellular location is the midbody. Functionally, microtubule-stabilizing protein involved in the control of cell motility and neurite outgrowth. Facilitate microtubule stabilization through the maintenance of acetylated stable microtubules. The sequence is that of MAP7 domain-containing protein 1 (Map7d1) from Rattus norvegicus (Rat).